The sequence spans 286 residues: Probable tRNA(His) guanylyltransferase (286 aa).

Residues Asp-29, Gly-30, and Asp-76 each contribute to the Mg(2+) site. GTP-binding positions include 29–34 and 75–76; these read DGKKFH and SD.

This sequence belongs to the tRNA(His) guanylyltransferase family. Mg(2+) serves as cofactor.

It catalyses the reaction a 5'-end ribonucleotide-tRNA(His) + GTP + ATP + H2O = a 5'-end phospho-guanosine-ribonucleotide-tRNA(His) + AMP + 2 diphosphate + H(+). Adds a GMP to the 5'-end of tRNA(His) after transcription and RNase P cleavage. This Drosophila melanogaster (Fruit fly) protein is Probable tRNA(His) guanylyltransferase.